The sequence spans 107 residues: uncharacterized protein (107 aa).

This is an uncharacterized protein from Microplitis demolitor (Parasitoid wasp).